Reading from the N-terminus, the 213-residue chain is Kynurenine formamidase (213 aa).

Trp18 contacts substrate. Residues His48, His52, and Asp54 each contribute to the Zn(2+) site. His58 acts as the Proton donor/acceptor in catalysis. His160 and Glu172 together coordinate Zn(2+).

The protein belongs to the Cyclase 1 superfamily. KynB family. In terms of assembly, homodimer. It depends on Zn(2+) as a cofactor.

It catalyses the reaction N-formyl-L-kynurenine + H2O = L-kynurenine + formate + H(+). It functions in the pathway amino-acid degradation; L-tryptophan degradation via kynurenine pathway; L-kynurenine from L-tryptophan: step 2/2. Functionally, catalyzes the hydrolysis of N-formyl-L-kynurenine to L-kynurenine, the second step in the kynurenine pathway of tryptophan degradation. In Burkholderia cenocepacia (strain HI2424), this protein is Kynurenine formamidase.